We begin with the raw amino-acid sequence, 873 residues long: Tyrosine-protein kinase receptor TYRO3 (873 aa).

Residues 1–28 (MELRRSMALPRLLLLGLWAAALRDGAVA) form the signal peptide. Ig-like C2-type domains lie at 29–116 (AGMK…KEES) and 127–208 (PYFT…ATVQ). At 29-416 (AGMKFTGSPI…QRQPPYGTSW (388 aa)) the chain is on the extracellular side. N-linked (GlcNAc...) asparagine glycosylation is present at asparagine 51. 2 disulfide bridges follow: cysteine 52-cysteine 105 and cysteine 148-cysteine 191. 7 N-linked (GlcNAc...) asparagine glycosylation sites follow: asparagine 179, asparagine 184, asparagine 218, asparagine 228, asparagine 281, asparagine 353, and asparagine 367. 2 Fibronectin type-III domains span residues 215 to 308 (PPLN…TLEL) and 310 to 403 (PSST…AQEV). The helical transmembrane segment at 417–437 (VPVALGILTALVTAVALALIL) threads the bilayer. Topologically, residues 438–873 (LRKRRKETRF…ELETEGEKSC (436 aa)) are cytoplasmic. A Protein kinase domain is found at 505–776 (FTLGRMLGKG…GVLRSQLEMI (272 aa)). ATP contacts are provided by residues 511 to 519 (LGKGEFGSV) and lysine 537. The active-site Proton acceptor is aspartate 642. A Phosphotyrosine; by autocatalysis modification is found at tyrosine 673. A disordered region spans residues 845–873 (VEGERHPEGQEGENKSLLYELETEGEKSC). Residues 847–858 (GERHPEGQEGEN) show a composition bias toward basic and acidic residues.

The protein belongs to the protein kinase superfamily. Tyr protein kinase family. AXL/UFO subfamily. In terms of processing, autophosphorylated on tyrosine residues. As to expression, detected in embryonic retina (at protein level). detected in brain, retina, kidney and in retinal Mueller glia-like cells.

Its subcellular location is the cell membrane. The catalysed reaction is L-tyrosyl-[protein] + ATP = O-phospho-L-tyrosyl-[protein] + ADP + H(+). Receptor tyrosine kinase that transduces signals from the extracellular matrix into the cytoplasm by binding to several ligands. Regulates many physiological processes including cell survival, migration and differentiation. Ligand binding at the cell surface induces dimerization and autophosphorylation of TYRO3 on its intracellular domain that provides docking sites for downstream signaling molecules. Following activation by ligand, enhances PI3-kinase activity and activates the AKT survival pathway, including nuclear translocation of NF-kappa-B and up-regulation of transcription of NF-kappa-B-regulated genes. The protein is Tyrosine-protein kinase receptor TYRO3 (TYRO3) of Gallus gallus (Chicken).